A 310-amino-acid polypeptide reads, in one-letter code: Protease HtpX homolog (310 aa).

The next 2 membrane-spanning stretches (helical) occupy residues 16–36 and 55–75; these read NAVL…VDAI and IFPT…LVCI. Position 166 (histidine 166) interacts with Zn(2+). Glutamate 167 is an active-site residue. Histidine 170 contributes to the Zn(2+) binding site. Transmembrane regions (helical) follow at residues 182-202 and 214-234; these read VGIL…FFMG and MILW…QMYL. Residue glutamate 239 coordinates Zn(2+).

This sequence belongs to the peptidase M48B family. It depends on Zn(2+) as a cofactor.

It localises to the cell inner membrane. The sequence is that of Protease HtpX homolog from Helicobacter pylori (strain J99 / ATCC 700824) (Campylobacter pylori J99).